A 532-amino-acid polypeptide reads, in one-letter code: SET and MYND domain-containing protein DDB_G0288495 (532 aa).

The region spanning P25–I448 is the SET domain. The segment at C70 to C116 adopts an MYND-type; degenerate zinc-finger fold. Residues I199–K240 are a coiled coil. Residues N204–N234 are disordered. Acidic residues predominate over residues F207 to Q217.

It belongs to the class V-like SAM-binding methyltransferase superfamily.

Its function is as follows. Probable methyltransferase. This chain is SET and MYND domain-containing protein DDB_G0288495, found in Dictyostelium discoideum (Social amoeba).